The chain runs to 615 residues: MSETSSNSPASGSKEAVPKSLAGSTSNIPNELFVGPDGRPLSQNAQGASKSSSKVVPQALVPEDDIRAVEGILNYGGSNDNRPVSHTHTFVELQKSHQNHLTENDRNFGTSRLDDVAPNADGVRRLRTSGSSTGLSNAPPSANVSKASSNLSLASLAKTQPERATPEVCVPLNPDTGSVPLIHPEQTDRGLPYAPDEKFHNSGSLKLPKGASLEDLSRSPSRAVLNEDGNVDECAPPEPWENEYNEVLDDVENAVVGTSPLEYTSKPLAANRQRSTADLTESDNICGLTAGKSDPVTDVDESQTIDEQSIPEAEKGFYTKDGEGTAGLPFDIVSNLDIPNENAHESSRSKKKHTGPSLSSASQPSAASSSSSSEPSNLDKINDVKKNIEVSANEPQPRPVKEDVPKSQVGGETDTTDVINNSTPKEETEESPSTELPETGKEQPPNKAEPAVPTEASSTKPSEAAEESTPRFSVRPNKFTGSRAGFVAALESRLQKGPLMRSFVPNKSKSPSGTKSPASGETSEAGVKETETTTSSESALPDARKSRARGPVRRPPTSVNTKPSFSVSGIDVFLNLPQSSVMKKKGVETRKEVEPKEEAVIPEEDVEVEVETEEQ.

Polar residues-rich tracts occupy residues 1–11, 41–55, and 128–140; these read MSETSSNSPAS, LSQN…SSKV, and TSGS…NAPP. Disordered stretches follow at residues 1–61 and 97–149; these read MSET…QALV and HQNH…KASS. S149 and S152 each carry phosphoserine. Residues 181–217 form a disordered region; that stretch reads LIHPEQTDRGLPYAPDEKFHNSGSLKLPKGASLEDLS. S219 and S275 each carry phosphoserine. 3 disordered regions span residues 266 to 481, 493 to 565, and 586 to 615; these read KPLA…KFTG, RLQK…KPSF, and GVET…TEEQ. Over residues 272-283 the composition is skewed to polar residues; that stretch reads RQRSTADLTESD. Phosphothreonine occurs at positions 276 and 297. Positions 312–323 are enriched in basic and acidic residues; the sequence is EAEKGFYTKDGE. Positions 356–376 are enriched in low complexity; sequence PSLSSASQPSAASSSSSSEPS. A compositionally biased stretch (polar residues) spans 505-522; that stretch reads PNKSKSPSGTKSPASGET. Position 514 is a phosphothreonine (T514). S516 carries the post-translational modification Phosphoserine. The span at 586-599 shows a compositional bias: basic and acidic residues; it reads GVETRKEVEPKEEA. Residues 600–615 show a composition bias toward acidic residues; the sequence is VIPEEDVEVEVETEEQ.

This is an uncharacterized protein from Schizosaccharomyces pombe (strain 972 / ATCC 24843) (Fission yeast).